Here is a 22-residue protein sequence, read N- to C-terminus: Peptide PGLa-BM3 (22 aa).

Residue Leu22 is modified to Leucine amide.

As to expression, expressed by the skin glands.

The protein resides in the secreted. In terms of biological role, antimicrobial peptide. The chain is Peptide PGLa-BM3 from Xenopus boumbaensis (Mawa clawed frog).